The sequence spans 176 residues: Adenine phosphoribosyltransferase (176 aa).

This sequence belongs to the purine/pyrimidine phosphoribosyltransferase family. Homodimer.

The protein resides in the cytoplasm. The enzyme catalyses AMP + diphosphate = 5-phospho-alpha-D-ribose 1-diphosphate + adenine. The protein operates within purine metabolism; AMP biosynthesis via salvage pathway; AMP from adenine: step 1/1. Catalyzes a salvage reaction resulting in the formation of AMP, that is energically less costly than de novo synthesis. The sequence is that of Adenine phosphoribosyltransferase from Borreliella burgdorferi (strain ZS7) (Borrelia burgdorferi).